Here is a 205-residue protein sequence, read N- to C-terminus: Iron-sulfur assembly protein 2 (205 aa).

The Fe cation site is built by Cys-131, Cys-196, and Cys-198.

It belongs to the HesB/IscA family.

The protein localises to the mitochondrion matrix. Functionally, involved in the assembly of mitochondrial and cytoplasmic iron-sulfur proteins. Probably involved in the binding of an intermediate of Fe/S cluster assembly. This Schizosaccharomyces pombe (strain 972 / ATCC 24843) (Fission yeast) protein is Iron-sulfur assembly protein 2 (isa2).